Here is a 1082-residue protein sequence, read N- to C-terminus: Sodium/potassium exporting P-type ATPase 2 (1082 aa).

Over 1–75 the chain is Cytoplasmic; sequence MSSINTNVAE…GANTLGDGDK (75 aa). A helical transmembrane segment spans residues 76 to 96; that stretch reads ISLTKIIAHQVCNAMILVLII. The Extracellular segment spans residues 97-98; it reads SM. A helical transmembrane segment spans residues 99 to 119; the sequence is VIALAIKDWISGGVIGFVVLI. The Cytoplasmic portion of the chain corresponds to 120–308; sequence NISVGFVQEY…VGTPLQRKLS (189 aa). Residues 309 to 329 form a helical membrane-spanning segment; the sequence is WLAIFLFWGCRYFCNYCNGIP. At 330–336 the chain is on the extracellular side; that stretch reads KNRVNKE. A helical membrane pass occupies residues 337–357; it reads VAIYAICVALSMIPSALIVVL. Topologically, residues 358-807 are cytoplasmic; sequence TITMAVGAQV…RMSSNIQKFV (450 aa). Asp393 serves as the catalytic 4-aspartylphosphate intermediate. Mg(2+) is bound by residues Asp393 and Thr395. ATP is bound by residues Thr395, Glu499, Lys552, Arg604, Thr664, Gly665, Asp666, Arg723, and Lys729. Asp748 contributes to the Mg(2+) binding site. Asn751 serves as a coordination point for ATP. Residues 808–828 traverse the membrane as a helical segment; it reads LQLLAENVAQALYLMVGLAFI. Residues 829 to 832 lie on the Extracellular side of the membrane; that stretch reads DDSG. A helical transmembrane segment spans residues 833–853; sequence LSVFPLSPVEVLWILVVTSCF. Residues 854 to 884 are Cytoplasmic-facing; sequence PAMDLGQERASDDILEESPNSTIFTWEVIID. Residues 885-905 traverse the membrane as a helical segment; it reads MIVYGFWMAVCCLVCFVIIVY. At 906–935 the chain is on the extracellular side; that stretch reads GEGDPYLGVNCNKSSSSNSDVCELVFRGRS. Residues 936–956 form a helical membrane-spanning segment; it reads ASFATMTWCALILAWECIHPY. Residues 957–983 are Cytoplasmic-facing; it reads NSLFYMRQDTDHPWWKQTVIDLWDNQF. A helical transmembrane segment spans residues 984–1004; it reads LFWSVAIGFISVFPVVYIPVI. The Extracellular portion of the chain corresponds to 1005–1007; that stretch reads NTK. Residues 1008 to 1028 form a helical membrane-spanning segment; that stretch reads VFLHGPIGYEWGLAVGFSILF. At 1029–1082 the chain is on the cytoplasmic side; it reads LAGSELWKWIKRIHKRKANKKAKNPEYELERSDPFKKYASFSRSNTMDRPELMV.

The protein belongs to the cation transport ATPase (P-type) (TC 3.A.3) family. Type IID subfamily. Requires Mg(2+) as cofactor. Post-translationally, the active site is phosphorylated in presence of sodium or potassium and in conditions of higher pH. Not phosphorylated in presence of calcium ions.

Its subcellular location is the cell membrane. The catalysed reaction is Na(+)(in) + ATP + H2O = Na(+)(out) + ADP + phosphate + H(+). It carries out the reaction K(+)(in) + ATP + H2O = K(+)(out) + ADP + phosphate + H(+). In terms of biological role, catalyzes the hydrolysis of ATP coupled with the export of sodium and potassium from the cell. May be an inefficient sodium exporter. May transport other cations such as lithium. Sodium/potassium efflux ATPases are involved in salt tolerance and maintaining the membrane potential across the plasma membrane in high salinity (Na+) or alkaline (K+) environments. The sequence is that of Sodium/potassium exporting P-type ATPase 2 from Schwanniomyces occidentalis (Yeast).